Reading from the N-terminus, the 64-residue chain is Alpha-conotoxin CnIL (64 aa).

The signal sequence occupies residues 1-21 (MGMRMMFTVFLLVVLTTTVVS). Positions 22 to 49 (FPSDSASDGRDDEAKDERSDIYESKRDG) are excised as a propeptide. 2 cysteine pairs are disulfide-bonded: Cys51–Cys56 and Cys52–Cys62. Cys62 is modified (cysteine amide).

The protein belongs to the conotoxin A superfamily. In terms of tissue distribution, expressed by the venom duct.

It localises to the secreted. This chain is Alpha-conotoxin CnIL, found in Conus consors (Singed cone).